Here is a 220-residue protein sequence, read N- to C-terminus: MSFKDFDAPKYKYKRKSLVEILKNEGIKSQKVLDAILKVPRHIFVPSEYLDLAYENEALPIGYEQTISQPYIVALMTEALDLKGDEKVLEIGTGSGYQTAILAELAKEVYTIERIRELSEEAKKRIKLLGYSNVYFKVGDGTLGWEEFSPYDRIIVTAASYDIPNPLKEQLKDGGVMVIPIGGRDFQYLYKITKKNGNFYRENLGGVRFVPLKGEYGWKD.

Residue Ser68 is part of the active site.

It belongs to the methyltransferase superfamily. L-isoaspartyl/D-aspartyl protein methyltransferase family.

It is found in the cytoplasm. It carries out the reaction [protein]-L-isoaspartate + S-adenosyl-L-methionine = [protein]-L-isoaspartate alpha-methyl ester + S-adenosyl-L-homocysteine. Catalyzes the methyl esterification of L-isoaspartyl residues in peptides and proteins that result from spontaneous decomposition of normal L-aspartyl and L-asparaginyl residues. It plays a role in the repair and/or degradation of damaged proteins. This Dictyoglomus turgidum (strain DSM 6724 / Z-1310) protein is Protein-L-isoaspartate O-methyltransferase.